The chain runs to 189 residues: GTP cyclohydrolase 1 (189 aa).

Residues Cys-80, His-83, and Cys-152 each contribute to the Zn(2+) site.

It belongs to the GTP cyclohydrolase I family. Toroid-shaped homodecamer, composed of two pentamers of five dimers.

It carries out the reaction GTP + H2O = 7,8-dihydroneopterin 3'-triphosphate + formate + H(+). It participates in cofactor biosynthesis; 7,8-dihydroneopterin triphosphate biosynthesis; 7,8-dihydroneopterin triphosphate from GTP: step 1/1. In Latilactobacillus sakei subsp. sakei (strain 23K) (Lactobacillus sakei subsp. sakei), this protein is GTP cyclohydrolase 1.